Reading from the N-terminus, the 319-residue chain is Acetyl-coenzyme A carboxylase carboxyl transferase subunit alpha (319 aa).

The CoA carboxyltransferase C-terminal domain maps to 35-296; the sequence is NIDEEVHRLR…KAQLLEDLAD (262 aa).

The protein belongs to the AccA family. In terms of assembly, acetyl-CoA carboxylase is a heterohexamer composed of biotin carboxyl carrier protein (AccB), biotin carboxylase (AccC) and two subunits each of ACCase subunit alpha (AccA) and ACCase subunit beta (AccD).

Its subcellular location is the cytoplasm. It carries out the reaction N(6)-carboxybiotinyl-L-lysyl-[protein] + acetyl-CoA = N(6)-biotinyl-L-lysyl-[protein] + malonyl-CoA. The protein operates within lipid metabolism; malonyl-CoA biosynthesis; malonyl-CoA from acetyl-CoA: step 1/1. Component of the acetyl coenzyme A carboxylase (ACC) complex. First, biotin carboxylase catalyzes the carboxylation of biotin on its carrier protein (BCCP) and then the CO(2) group is transferred by the carboxyltransferase to acetyl-CoA to form malonyl-CoA. The chain is Acetyl-coenzyme A carboxylase carboxyl transferase subunit alpha from Salmonella agona (strain SL483).